The chain runs to 370 residues: MVVPAAAAPECGRREAAAAAAAAVFCRRGRGVVVPTVDMSAPAGRGELSRQVARACAGSGFFRAVNHGVPPRVSAAMDAAAAAFFVRAGAEKQLAGPPDPLGYGSRSIGANGDVGELEYLILHASPDAVARKASAIDREDPRRFSQVVNDYVEAVRQLACHVLDLLGEGLGLRDPTSLTRLITATDNDSLIRINHYPPSCAAAAGDHKSGGGPAPTAAIGFGEHTDPQILSVLRANDADGLQLLLPDAAAAGDSVWVPVPPDPSAFFVNVGDLLQALTNGRLVSIRHRVVVGTGKPRLSTIYFAAPPLHARISALPETVAAGAPRRYRAFTWAEYKRTMYTLRLSHNRLDLFHAGDGDGDAGVGDDDDHE.

Residues 186–306 form the Fe2OG dioxygenase domain; that stretch reads DNDSLIRINH…RLSTIYFAAP (121 aa). Tyr196 lines the 2-oxoglutarate pocket. Fe cation is bound by residues His224, Asp226, and His287. 2-oxoglutarate-binding residues include Arg297 and Ser299.

This sequence belongs to the iron/ascorbate-dependent oxidoreductase family. GA2OX subfamily. Fe(2+) is required as a cofactor.

The catalysed reaction is gibberellin A1 + 2-oxoglutarate + O2 = gibberellin A8 + succinate + CO2. In terms of biological role, catalyzes the 2-beta-hydroxylation of several biologically active gibberellins, leading to the homeostatic regulation of their endogenous level. Catabolism of gibberellins (GAs) plays a central role in plant development. This chain is Gibberellin 2-beta-dioxygenase 2, found in Oryza sativa subsp. japonica (Rice).